The primary structure comprises 219 residues: Pollen-specific protein SF3 (219 aa).

2 consecutive LIM zinc-binding domains span residues 9–109 (QKCT…TRDK) and 110–167 (CNAC…QLFK). Positions 181–219 (VAAPAESETQNTETQNAETQNADTQNADTQNTETQNGSV) are disordered. Residues 185–202 (AESETQNTETQNAETQNA) are compositionally biased toward low complexity. Polar residues predominate over residues 203 to 219 (DTQNADTQNTETQNGSV).

As to expression, pollen.

Could possibly involved in controlling pollen-specific processes such as male gamete maturation, pollen tube formation, or even fertilization. This chain is Pollen-specific protein SF3 (SF3), found in Helianthus annuus (Common sunflower).